The following is a 311-amino-acid chain: Methionyl-tRNA formyltransferase (311 aa).

110–113 (SLLP) is a (6S)-5,6,7,8-tetrahydrofolate binding site.

Belongs to the Fmt family.

The enzyme catalyses L-methionyl-tRNA(fMet) + (6R)-10-formyltetrahydrofolate = N-formyl-L-methionyl-tRNA(fMet) + (6S)-5,6,7,8-tetrahydrofolate + H(+). Attaches a formyl group to the free amino group of methionyl-tRNA(fMet). The formyl group appears to play a dual role in the initiator identity of N-formylmethionyl-tRNA by promoting its recognition by IF2 and preventing the misappropriation of this tRNA by the elongation apparatus. This is Methionyl-tRNA formyltransferase from Streptococcus sanguinis (strain SK36).